Consider the following 995-residue polypeptide: Endo-beta-N-acetylglucosaminidase EndoS (995 aa).

Residues 1–36 form the signal peptide; sequence MDKHLLVKRTLGCVCAATLMGAALATHHDSLNTVKA. The 321-residue stretch at 112 to 432 folds into the GH18 domain; that stretch reads SLYGGYFRTW…KDATDNIFHS (321 aa). The a glycoprotein site is built by His-151, Trp-153, and Arg-186. Glu-235 (proton donor) is an active-site residue. A glycoprotein is bound by residues Asp-237, Gln-303, Tyr-305, Glu-349, Glu-350, Asn-356, and Tyr-402. LRR repeat units follow at residues 437–460, 478–503, 562–585, and 586–609; these read SKAL…DFPD, LERF…KFKK, LTGL…DAAT, and LTSL…ENRQ. The interval 765-923 is carbohydrate-binding module (CBM); the sequence is MVNLAEGATV…VPELQILGYP (159 aa). The Ca(2+) site is built by Lys-786, Asp-789, Gln-791, Pro-915, and Glu-916. Residues 924–995 are three-helix bundle (3H); sequence LPNADTIMKT…CIEKRQLLKK (72 aa).

The protein belongs to the glycosyl hydrolase 18 family. Post-translationally, cleaved by SpeB protease; leading to loss of endoglucosidase activity. EndoS is produced and secreted prior to SpeB, suggesting that it is degraded after acting as a host immune evasion factor.

It localises to the secreted. The protein localises to the host extracellular space. The enzyme catalyses an N(4)-(oligosaccharide-(1-&gt;3)-[oligosaccharide-(1-&gt;6)]-beta-D-Man-(1-&gt;4)-beta-D-GlcNAc-(1-&gt;4)-alpha-D-GlcNAc)-L-asparaginyl-[protein] + H2O = an oligosaccharide-(1-&gt;3)-[oligosaccharide-(1-&gt;6)]-beta-D-Man-(1-&gt;4)-D-GlcNAc + N(4)-(N-acetyl-beta-D-glucosaminyl)-L-asparaginyl-[protein]. Endoglucosidase that acts as a host immune evasion factor by mediating hydrolysis of the N-linked glycan from the Fc region of host immunoglobulin-gamma (IgG) during infection. Specifically catalyzes the hydrolysis of the beta-1,4 linkage between the first two N-acetylglucosamine residues of the complex-type N-linked glycan located on 'Asn-297' of the Fc region of IgG antibodies (IGHG1, IGHG2, IGHG3 or IGHG4), thereby preventing interaction between IgGs and Fc receptors and ability to activate the complement pathway. Shows a specificity for biantennary complex type N-glycans; does neither cleave larger complex type glycans nor oligomannose and nor hybrid-type glycans. Specifically acts on IgGs; does not act on immunoglobulin alpha, beta, delta or mu. In Streptococcus pyogenes serotype M1, this protein is Endo-beta-N-acetylglucosaminidase EndoS.